The primary structure comprises 218 residues: MADSKAKPAKAANKTPPKSPGDPARAAKRLSLESEGANEGATAAPELSALEEAFRRFAVHGDTRATGKEMHGKNWSKLCKDCHVIDGKNVTVTDVDIVFSKIKGKSCRTITFEQFQEALEELAKKRFKDKSSEEAVREVHRLIEGRAPVISGVTKAVSSPTVSRLTDTSKFTGSHKERFDQSGKGKGKAGRVDLVDESGYVPGYKHAGTYDQKVQGGK.

The disordered stretch occupies residues 1–46 (MADSKAKPAKAANKTPPKSPGDPARAAKRLSLESEGANEGATAAPE). A mediates interaction with LIMK1 region spans residues 1-115 (MADSKAKPAK…SCRTITFEQF (115 aa)). At threonine 15 the chain carries Phosphothreonine. Residues serine 19, serine 31, and serine 34 each carry the phosphoserine modification. Residue threonine 42 is modified to Phosphothreonine. Zn(2+) contacts are provided by histidine 60, histidine 71, cysteine 79, and cysteine 82. Threonine 91 is subject to Phosphothreonine. Serine 106 is subject to Phosphoserine. Serine 151 carries O-linked (GlcNAc) serine glycosylation. 2 positions are modified to phosphoserine: serine 158 and serine 159. The tract at residues 166–192 (TDTSKFTGSHKERFDQSGKGKGKAGRV) is disordered. Over residues 174-183 (SHKERFDQSG) the composition is skewed to basic and acidic residues.

This sequence belongs to the TPPP family. In terms of assembly, homodimer. Binds tubulin; binding is inhibited by GTP. Interacts with MAPK1. Interacts with GAPDH; the interaction is direct. Interacts with LIMK1 (via the PDZ domain); the interaction is direct. Interacts with LIMK2. Interacts with HDAC6; thereby inhibiting the tubulin deacetylase activity of HDAC6. Interacts with aggregated SNCA; may have a pro-aggregatory role in synucleinopathies. Interacts with DYNLL1. Interacts (via C-terminus) with S100A2, S100A6 and S100B; these interactions inhibit TPPP dimerization. Mg(2+) serves as cofactor. In terms of processing, phosphorylated by LIMK1 on serine residues; phosphorylation may alter the tubulin polymerization activity. Phosphorylation by LIMK2, but not LIMK1, regulates astral microtubule organization at early stage of mitosis. Phosphorylation by ROCK1 at Ser-31, Ser-106 and Ser-158 inhibits interaction with HDAC6, resulting in decreased acetylation of tubulin, increased cell motility and entry into S-phase. Phosphorylation by CDK1 inhibits the microtubule polymerizing activity. Post-translationally, degraded by the proteasome; zinc-binding inhibits degradation by the proteasome. As to expression, widely expressed with higher expression in brain (at protein level).

It localises to the golgi outpost. Its subcellular location is the cytoplasm. The protein resides in the cytoskeleton. It is found in the microtubule organizing center. The protein localises to the nucleus. It localises to the spindle. The catalysed reaction is GTP + H2O = GDP + phosphate + H(+). Functionally, regulator of microtubule dynamics that plays a key role in myelination by promoting elongation of the myelin sheath. Acts as a microtubule nucleation factor in oligodendrocytes: specifically localizes to the postsynaptic Golgi apparatus region, also named Golgi outpost, and promotes microtubule nucleation, an important step for elongation of the myelin sheath. Required for both uniform polarized growth of distal microtubules as well as directing the branching of proximal processes. Shows magnesium-dependent GTPase activity; the role of the GTPase activity is unclear. In addition to microtubule nucleation activity, also involved in microtubule bundling and stabilization of existing microtubules, thereby maintaining the integrity of the microtubule network. Regulates microtubule dynamics by promoting tubulin acetylation: acts by inhibiting the tubulin deacetylase activity of HDAC6. Also regulates cell migration: phosphorylation by ROCK1 inhibits interaction with HDAC6, resulting in decreased acetylation of tubulin and increased cell motility. Plays a role in cell proliferation by regulating the G1/S-phase transition. Involved in astral microtubule organization and mitotic spindle orientation during early stage of mitosis; this process is regulated by phosphorylation by LIMK2. The chain is Tubulin polymerization-promoting protein from Mus musculus (Mouse).